The chain runs to 782 residues: Nezukol synthase KSL3 (782 aa).

Mg(2+) contacts are provided by Asp529, Asp533, Asn677, and Glu685. A DDXXD motif motif is present at residues 529 to 533 (DDVFD).

Belongs to the terpene synthase family. Mg(2+) is required as a cofactor. In terms of tissue distribution, highly expressed in leaves, and, at low levels, in stems, but barely in roots and flowers.

The enzyme catalyses (+)-copalyl diphosphate = miltiradiene + diphosphate. It carries out the reaction (+)-copalyl diphosphate + H2O = nezukol + diphosphate. The protein operates within secondary metabolite biosynthesis; terpenoid biosynthesis. In terms of biological role, involved in the biosynthesis of ent-kaurene diterpenoids natural products such as oridonin, miltiradiene, eriocalyxin B and nezukol, known to exhibit antitumor, anti-inflammatory and antibacterial activities. Catalyzes the conversion of (+)-copalyl diphosphate ((+)-CPP) to nezukol and miltiradiene. The reaction mechanism proceeds via the ionization of the diphosphate group of (+)-CPP, followed by formation of an intermediary pimar-15-en-8-yl(+) carbocation and neutralization of the carbocation by water capture at C-8 to yield nezukol. Can interact with ent-copalyl diphosphate (ent-CPP) but seems unable to use it as substrate. The chain is Nezukol synthase KSL3 from Isodon rubescens (Rabdosia rubescens).